The primary structure comprises 364 residues: Aminomethyltransferase (364 aa).

Belongs to the GcvT family. The glycine cleavage system is composed of four proteins: P, T, L and H.

The catalysed reaction is N(6)-[(R)-S(8)-aminomethyldihydrolipoyl]-L-lysyl-[protein] + (6S)-5,6,7,8-tetrahydrofolate = N(6)-[(R)-dihydrolipoyl]-L-lysyl-[protein] + (6R)-5,10-methylene-5,6,7,8-tetrahydrofolate + NH4(+). In terms of biological role, the glycine cleavage system catalyzes the degradation of glycine. This Photorhabdus laumondii subsp. laumondii (strain DSM 15139 / CIP 105565 / TT01) (Photorhabdus luminescens subsp. laumondii) protein is Aminomethyltransferase.